The primary structure comprises 407 residues: Tryptophan synthase beta chain (407 aa).

Lys-98 carries the post-translational modification N6-(pyridoxal phosphate)lysine.

This sequence belongs to the TrpB family. As to quaternary structure, tetramer of two alpha and two beta chains. Pyridoxal 5'-phosphate serves as cofactor.

It catalyses the reaction (1S,2R)-1-C-(indol-3-yl)glycerol 3-phosphate + L-serine = D-glyceraldehyde 3-phosphate + L-tryptophan + H2O. The protein operates within amino-acid biosynthesis; L-tryptophan biosynthesis; L-tryptophan from chorismate: step 5/5. Its function is as follows. The beta subunit is responsible for the synthesis of L-tryptophan from indole and L-serine. The chain is Tryptophan synthase beta chain from Bradyrhizobium sp. (strain BTAi1 / ATCC BAA-1182).